An 834-amino-acid polypeptide reads, in one-letter code: DNA-directed RNA polymerase subunit beta' (834 aa).

The segment covering 1 to 22 (MTYSNKPTGSSLRSSRNSTLEP) has biased composition (polar residues). The tract at residues 1-45 (MTYSNKPTGSSLRSSRNSTLEPQSLVHREESKRQEGPKGQNLRIG) is disordered. Residues 26–36 (VHREESKRQEG) show a composition bias toward basic and acidic residues. The Zn(2+) site is built by Cys101, Cys103, Cys118, and Cys121. Residues Asp606, Asp608, and Asp610 each contribute to the Mg(2+) site.

The protein belongs to the RNA polymerase beta' chain family. RpoC1 subfamily. In plastids the minimal PEP RNA polymerase catalytic core is composed of four subunits: alpha, beta, beta', and beta''. When a (nuclear-encoded) sigma factor is associated with the core the holoenzyme is formed, which can initiate transcription. Requires Mg(2+) as cofactor. The cofactor is Zn(2+).

It localises to the plastid. The protein resides in the chloroplast. The catalysed reaction is RNA(n) + a ribonucleoside 5'-triphosphate = RNA(n+1) + diphosphate. Its function is as follows. DNA-dependent RNA polymerase catalyzes the transcription of DNA into RNA using the four ribonucleoside triphosphates as substrates. The protein is DNA-directed RNA polymerase subunit beta' of Staurastrum punctulatum (Green alga).